The sequence spans 178 residues: Prion-like protein doppel (178 aa).

A signal peptide spans 1-25 (MRKHLGGCWLAIVCILLFSQLCSVK). The segment at 27 to 50 (RGIKHRIKWNRKVLPSTSQVTEAR) is flexible tail. Residues 51–154 (TAEIRPGAFI…KHCDFWLERG (104 aa)) form a globular region. Intrachain disulfides connect Cys94/Cys147 and Cys108/Cys142. 2 N-linked (GlcNAc...) asparagine glycosylation sites follow: Asn98 and Asn110. A cu(2+) binding region spans residues 124–141 (KQDNKLYQRVLWQLIREL). The GPI-anchor amidated glycine moiety is linked to residue Gly154. Positions 155-178 (AGLRVTLDQPMMLCLLVFIWFIVK) are cleaved as a propeptide — removed in mature form.

It belongs to the prion family. In terms of processing, N-glycosylated. Post-translationally, O-glycosylated. As to expression, strongly expressed in testis. Detected at low levels in ovary, spleen, kidney and mammary gland.

The protein localises to the cell membrane. Functionally, required for normal acrosome reaction and for normal male fertility. Can bind Cu(2+). The protein is Prion-like protein doppel (PRND) of Bos taurus (Bovine).